The primary structure comprises 360 residues: Actin-like protein MamK (360 aa).

ATP-binding positions include Lys22, 33-34, and Asp89; that span reads TS. Glu156 provides a ligand contact to Mg(2+). Residues 177-179, 231-235, and Gly302 each bind ATP; these read AGT and KEQFS.

It belongs to the FtsA/MreB family. MamK subfamily. Forms cytoplasmic filaments. Interacts with MamJ. Forms filaments in the absence of other magnetosome proteins and in E.coli. Filament formation in vitro requires ATP, GTP or a non-hydrolyzable ATP analog.

The protein resides in the cytoplasm. It is found in the cytoskeleton. The catalysed reaction is ATP + H2O = ADP + phosphate + H(+). With respect to regulation, filament dynamics depend partially on MamJ. Its function is as follows. Protein with ATPase activity which forms dynamic cytoplasmic filaments that are involved in sorting, concatenating and/or correctly positioning of magnetosomes in the cell. Not absolutely necessary for assembly of short chains. Filaments grow from the both cell poles towards midcell, and are probably disassembled at the other end of the cell, a process known as treadmilling. Polymerizes in the presence of ATP, GTP or a non-hydrolyzable ATP analog. Required for correct segregation and positioning of magnetosomes following cell division. The protein is Actin-like protein MamK of Magnetospirillum gryphiswaldense (strain DSM 6361 / JCM 21280 / NBRC 15271 / MSR-1).